Consider the following 353-residue polypeptide: Photosystem II protein D1 (353 aa).

An N-acetylthreonine modification is found at T2. Phosphothreonine is present on T2. The next 3 membrane-spanning stretches (helical) occupy residues 29 to 46 (YIGW…TATS), 118 to 133 (HFLL…EWEL), and 142 to 156 (WIAV…AATA). H118 is a binding site for chlorophyll a. Y126 lines the pheophytin a pocket. The [CaMn4O5] cluster site is built by D170 and E189. The helical transmembrane segment at 197 to 218 (FHMLGVAGVFGGSLFSAMHGSL) threads the bilayer. H198 contributes to the chlorophyll a binding site. Residues H215 and 264-265 (SF) contribute to the a quinone site. Residue H215 participates in Fe cation binding. H272 serves as a coordination point for Fe cation. A helical membrane pass occupies residues 274-288 (FLAAWPVVGIWFTAL). [CaMn4O5] cluster-binding residues include H332, E333, D342, and A344. Positions 345–353 (AIEAPATNG) are excised as a propeptide.

This sequence belongs to the reaction center PufL/M/PsbA/D family. In terms of assembly, PSII is composed of 1 copy each of membrane proteins PsbA, PsbB, PsbC, PsbD, PsbE, PsbF, PsbH, PsbI, PsbJ, PsbK, PsbL, PsbM, PsbT, PsbX, PsbY, PsbZ, Psb30/Ycf12, at least 3 peripheral proteins of the oxygen-evolving complex and a large number of cofactors. It forms dimeric complexes. The cofactor is The D1/D2 heterodimer binds P680, chlorophylls that are the primary electron donor of PSII, and subsequent electron acceptors. It shares a non-heme iron and each subunit binds pheophytin, quinone, additional chlorophylls, carotenoids and lipids. D1 provides most of the ligands for the Mn4-Ca-O5 cluster of the oxygen-evolving complex (OEC). There is also a Cl(-1) ion associated with D1 and D2, which is required for oxygen evolution. The PSII complex binds additional chlorophylls, carotenoids and specific lipids.. In terms of processing, tyr-161 forms a radical intermediate that is referred to as redox-active TyrZ, YZ or Y-Z. Post-translationally, C-terminally processed by CTPA; processing is essential to allow assembly of the oxygen-evolving complex and thus photosynthetic growth.

The protein resides in the plastid membrane. The catalysed reaction is 2 a plastoquinone + 4 hnu + 2 H2O = 2 a plastoquinol + O2. Functionally, photosystem II (PSII) is a light-driven water:plastoquinone oxidoreductase that uses light energy to abstract electrons from H(2)O, generating O(2) and a proton gradient subsequently used for ATP formation. It consists of a core antenna complex that captures photons, and an electron transfer chain that converts photonic excitation into a charge separation. The D1/D2 (PsbA/PsbD) reaction center heterodimer binds P680, the primary electron donor of PSII as well as several subsequent electron acceptors. This is Photosystem II protein D1 from Cuscuta exaltata (Tall dodder).